Consider the following 275-residue polypeptide: Probable siderophore transport system ATP-binding protein YusV (275 aa).

In terms of domain architecture, ABC transporter spans 6-242 (ISTETLSLGY…DLVQNVFSMN (237 aa)). 38-45 (GSNGCGKS) is an ATP binding site.

It belongs to the ABC transporter superfamily. In terms of assembly, the iron-hydroxamate siderophore complex is composed of one ATP-binding protein (YusV), two transmembrane proteins (YfiZ and YfhA) and a solute-binding protein (YfiY); the catechoplate siderophore complex is composed of one ATP-binding protein (YusV), two transmembrane proteins (FeuB and FeuC) and a solute-binding protein (FeuA).

It is found in the cell membrane. Its function is as follows. Provides the ATPase subunit for at least 2 ABC transporter complexes; YfiYZ/YfhA/YusV involved in import of the iron-hydroxamate siderophores schizokinen, arthrobactin and corprogen, and FeuABC/YusV involved in import of the catecholate siderophores bacillibactin and enterobactin. Probably responsible for energy coupling to the transport system. This Bacillus subtilis (strain 168) protein is Probable siderophore transport system ATP-binding protein YusV (yusV).